The chain runs to 558 residues: Arginine--tRNA ligase (558 aa).

The short motif at 119-129 is the 'HIGH' region element; sequence ANPNGPLHVGH.

Belongs to the class-I aminoacyl-tRNA synthetase family.

The protein localises to the cytoplasm. The enzyme catalyses tRNA(Arg) + L-arginine + ATP = L-arginyl-tRNA(Arg) + AMP + diphosphate. This Methanoregula boonei (strain DSM 21154 / JCM 14090 / 6A8) protein is Arginine--tRNA ligase.